A 1454-amino-acid polypeptide reads, in one-letter code: ABC transporter G family member 39 (1454 aa).

In terms of domain architecture, ABC transporter 1 spans 175 to 448; it reads LGFFHLLPSK…FEYFGFQCPE (274 aa). Position 208-215 (208-215) interacts with ATP; the sequence is GPPSSGKT. Residues 526–739 form the ABC transmembrane type-2 1 domain; that stretch reads ELFKACFDRE…GQTAIVMNEF (214 aa). Transmembrane regions (helical) follow at residues 544 to 564, 584 to 604, 623 to 643, 663 to 683, 689 to 709, 716 to 736, and 775 to 795; these read FVYVFKTVQITIMSLITMTVY, MFFSLINVMFNGLAELAFTVM, FALPAWLLKIPLSLIESGIWI, LLAYFCVNQMALSLFRFLGAI, ISNSIGTFTLLIVFTLGGFII, PWMTWAYYMSPMMYGQTAIVM, and FWICIVALLGFSLLFNLFYIL. Residues 812 to 824 show a composition bias toward basic and acidic residues; sequence EEGKDKQKGENRG. The tract at residues 812-838 is disordered; it reads EEGKDKQKGENRGTEGSVVELNSSSNK. An ABC transporter 2 domain is found at 853–1106; it reads LAFNNVNYYV…LVEYFEAVEG (254 aa). 898–905 lines the ATP pocket; the sequence is GVSGAGKT. The ABC transmembrane type-2 2 domain maps to 1178 to 1392; sequence TQTKACFWKQ…TLYGLITSQV (215 aa). 7 helical membrane-spanning segments follow: residues 1199–1219, 1231–1251, 1285–1303, 1312–1332, 1342–1362, 1367–1387, and 1423–1443; these read AIRFLMTVVIGVLFGLIFWQI, NFFGAMYAAVLFLGALNAATV, IMYNTIQTGVYTLILYSMI, FLWFYYYMLTSFIYFTLYGMM, IAGICMSFFLSLWNLFSGFLI, IPIWWRWYYWATPVAWTLYGL, and FLPVVAVVHIAWILLFLFVFA.

The protein belongs to the ABC transporter superfamily. ABCG family. PDR (TC 3.A.1.205) subfamily.

Its subcellular location is the membrane. May be a general defense protein. The sequence is that of ABC transporter G family member 39 (ABCG39) from Arabidopsis thaliana (Mouse-ear cress).